Consider the following 360-residue polypeptide: Aminomethyltransferase (360 aa).

It belongs to the GcvT family. As to quaternary structure, the glycine cleavage system is composed of four proteins: P, T, L and H.

It carries out the reaction N(6)-[(R)-S(8)-aminomethyldihydrolipoyl]-L-lysyl-[protein] + (6S)-5,6,7,8-tetrahydrofolate = N(6)-[(R)-dihydrolipoyl]-L-lysyl-[protein] + (6R)-5,10-methylene-5,6,7,8-tetrahydrofolate + NH4(+). Its function is as follows. The glycine cleavage system catalyzes the degradation of glycine. The polypeptide is Aminomethyltransferase (Pseudomonas syringae pv. tomato (strain ATCC BAA-871 / DC3000)).